Reading from the N-terminus, the 367-residue chain is Glutamate 5-kinase 2 (367 aa).

K10 provides a ligand contact to ATP. S50, D136, and N148 together coordinate substrate. Residues 168 to 169 and 210 to 216 each bind ATP; these read TD and TGGMATK. A PUA domain is found at 275 to 353; that stretch reads SGQIVIDAGA…KQIGELLDYD (79 aa).

This sequence belongs to the glutamate 5-kinase family.

The protein resides in the cytoplasm. The catalysed reaction is L-glutamate + ATP = L-glutamyl 5-phosphate + ADP. It participates in amino-acid biosynthesis; L-proline biosynthesis; L-glutamate 5-semialdehyde from L-glutamate: step 1/2. In terms of biological role, catalyzes the transfer of a phosphate group to glutamate to form L-glutamate 5-phosphate. The chain is Glutamate 5-kinase 2 from Pseudoalteromonas translucida (strain TAC 125).